A 605-amino-acid polypeptide reads, in one-letter code: Ras guanine nucleotide exchange factor A (605 aa).

Positions 67–99 (DKTAIIQLILQHLSTKGLKQTKQTLEKEARTTT) constitute a LisH domain. One can recognise an N-terminal Ras-GEF domain in the interval 198-320 (DDEVVKFASL…SLTKMVEKLS (123 aa)). One can recognise a Ras-GEF domain in the interval 353-597 (DEEEIARQLT…YRESLKREPK (245 aa)).

In terms of assembly, component of the Sca1 complex composed of at least gefA, gefH, scaA, phr, and the protein phosphatase 2A subunits pppA and pho2B. Interacts directly with gefH.

It localises to the cell membrane. Functionally, ras-bound GDP/GTP exchange factor required for normal activation of adenylyl cyclase. Component of the Sca1 complex, a regulator of cell motility, chemotaxis and signal relay. The Sca1 complex is recruited to the plasma membrane in a chemoattractant- and F-actin-dependent manner and is enriched at the leading edge of chemotaxing cells where it regulates F-actin dynamics and signal relay by controlling the activation of rasC and the downstream target of rapamycin complex 2 (TORC2)-Akt/protein kinase B (PKB) pathway. This chain is Ras guanine nucleotide exchange factor A (gefA), found in Dictyostelium discoideum (Social amoeba).